Consider the following 177-residue polypeptide: Ribosome maturation factor RimM (177 aa).

The region spanning 92–166 is the PRC barrel domain; the sequence is EDTFYHADLM…RIVVVPDTNP (75 aa).

This sequence belongs to the RimM family. In terms of assembly, binds ribosomal protein uS19.

The protein resides in the cytoplasm. An accessory protein needed during the final step in the assembly of 30S ribosomal subunit, possibly for assembly of the head region. Essential for efficient processing of 16S rRNA. May be needed both before and after RbfA during the maturation of 16S rRNA. It has affinity for free ribosomal 30S subunits but not for 70S ribosomes. The sequence is that of Ribosome maturation factor RimM from Azorhizobium caulinodans (strain ATCC 43989 / DSM 5975 / JCM 20966 / LMG 6465 / NBRC 14845 / NCIMB 13405 / ORS 571).